Consider the following 374-residue polypeptide: Probable quinol oxidase subunit 2 (374 aa).

The N-terminal stretch at methionine 1–glycine 19 is a signal peptide. A lipid anchor (N-palmitoyl cysteine) is attached at cysteine 20. Cysteine 20 carries S-diacylglycerol cysteine lipidation. 2 consecutive transmembrane segments (helical) span residues serine 43–phenylalanine 63 and isoleucine 82–valine 102. Residues glutamate 317–histidine 374 form a disordered region. Residues glutamate 330–histidine 374 are compositionally biased toward basic and acidic residues.

This sequence belongs to the cytochrome c oxidase subunit 2 family.

Its subcellular location is the cell membrane. It carries out the reaction 2 a quinol + O2 = 2 a quinone + 2 H2O. Its function is as follows. Catalyzes quinol oxidation with the concomitant reduction of oxygen to water. Subunit II transfers the electrons from a quinol to the binuclear center of the catalytic subunit I. This Staphylococcus epidermidis (strain ATCC 12228 / FDA PCI 1200) protein is Probable quinol oxidase subunit 2 (qoxA).